We begin with the raw amino-acid sequence, 211 residues long: FMN-dependent NADH:quinone oxidoreductase (211 aa).

Residue 17 to 19 (SYS) participates in FMN binding.

Belongs to the azoreductase type 1 family. Homodimer. It depends on FMN as a cofactor.

The catalysed reaction is 2 a quinone + NADH + H(+) = 2 a 1,4-benzosemiquinone + NAD(+). The enzyme catalyses N,N-dimethyl-1,4-phenylenediamine + anthranilate + 2 NAD(+) = 2-(4-dimethylaminophenyl)diazenylbenzoate + 2 NADH + 2 H(+). Quinone reductase that provides resistance to thiol-specific stress caused by electrophilic quinones. Functionally, also exhibits azoreductase activity. Catalyzes the reductive cleavage of the azo bond in aromatic azo compounds to the corresponding amines. This is FMN-dependent NADH:quinone oxidoreductase from Bacillus velezensis (strain DSM 23117 / BGSC 10A6 / LMG 26770 / FZB42) (Bacillus amyloliquefaciens subsp. plantarum).